Here is a 549-residue protein sequence, read N- to C-terminus: Probable acyl-activating enzyme 10 (549 aa).

It belongs to the ATP-dependent AMP-binding enzyme family. As to expression, expressed at low levels in roots.

Functionally, may act as an acid--thiol ligase that activates carboxylic acids by forming acyl-CoAs. The sequence is that of Probable acyl-activating enzyme 10 (AEE10) from Arabidopsis thaliana (Mouse-ear cress).